The chain runs to 237 residues: Sugar fermentation stimulation protein homolog (237 aa).

Belongs to the SfsA family.

The protein is Sugar fermentation stimulation protein homolog of Colwellia psychrerythraea (strain 34H / ATCC BAA-681) (Vibrio psychroerythus).